Reading from the N-terminus, the 175-residue chain is uncharacterized protein (175 aa).

This sequence belongs to the asfivirus B175L family.

This is an uncharacterized protein from African swine fever virus (strain Badajoz 1971 Vero-adapted) (Ba71V).